The following is a 492-amino-acid chain: Prenylcysteine oxidase 1-like (492 aa).

Residues 1–21 (MAHAARLLAALAALLAAAATG) form the signal peptide. Residue Asn340 is glycosylated (N-linked (GlcNAc...) asparagine).

This sequence belongs to the prenylcysteine oxidase family. The cofactor is FAD.

It localises to the secreted. Functionally, likely to have oxidoreductase activity. Required in the mevalonate pathway to regulate prenylation and enhances the bactericidal activity of neutrophils. This chain is Prenylcysteine oxidase 1-like (PCYOX1L), found in Bos taurus (Bovine).